The sequence spans 254 residues: Persulfide dioxygenase ETHE1, mitochondrial (254 aa).

The N-terminal 7 residues, 1-7 (MAEAVLR), are a transit peptide targeting the mitochondrion. Phosphoserine is present on residues S14 and S19. K66 bears the N6-acetyllysine mark. Residues H79, H135, and D154 each coordinate Fe cation. K172 carries the N6-acetyllysine; alternate modification. K172 carries the N6-succinyllysine; alternate modification.

This sequence belongs to the metallo-beta-lactamase superfamily. Glyoxalase II family. As to quaternary structure, homodimer. Monomer. Interacts with TST. May interact with RELA. The cofactor is Fe(2+). Ubiquitously expressed.

The protein localises to the cytoplasm. It is found in the nucleus. It localises to the mitochondrion matrix. It carries out the reaction S-sulfanylglutathione + O2 + H2O = sulfite + glutathione + 2 H(+). Its activity is regulated as follows. Glutathione increases enzyme activity. In terms of biological role, sulfur dioxygenase that plays an essential role in hydrogen sulfide catabolism in the mitochondrial matrix. Hydrogen sulfide (H(2)S) is first oxidized by SQRDL, giving rise to cysteine persulfide residues. ETHE1 consumes molecular oxygen to catalyze the oxidation of the persulfide, once it has been transferred to a thiophilic acceptor, such as glutathione (R-SSH). Plays an important role in metabolic homeostasis in mitochondria by metabolizing hydrogen sulfide and preventing the accumulation of supraphysiological H(2)S levels that have toxic effects, due to the inhibition of cytochrome c oxidase. First described as a protein that can shuttle between the nucleus and the cytoplasm and suppress p53-induced apoptosis by sequestering the transcription factor RELA/NFKB3 in the cytoplasm and preventing its accumulation in the nucleus. This is Persulfide dioxygenase ETHE1, mitochondrial (ETHE1) from Homo sapiens (Human).